The chain runs to 69 residues: Large ribosomal subunit protein uL29 (69 aa).

Belongs to the universal ribosomal protein uL29 family.

This is Large ribosomal subunit protein uL29 from Oenococcus oeni (strain ATCC BAA-331 / PSU-1).